We begin with the raw amino-acid sequence, 144 residues long: D-aminoacyl-tRNA deacylase (144 aa).

The Gly-cisPro motif, important for rejection of L-amino acids motif lies at 136–137 (GP).

The protein belongs to the DTD family. In terms of assembly, homodimer.

The protein localises to the cytoplasm. The enzyme catalyses glycyl-tRNA(Ala) + H2O = tRNA(Ala) + glycine + H(+). The catalysed reaction is a D-aminoacyl-tRNA + H2O = a tRNA + a D-alpha-amino acid + H(+). Functionally, an aminoacyl-tRNA editing enzyme that deacylates mischarged D-aminoacyl-tRNAs. Also deacylates mischarged glycyl-tRNA(Ala), protecting cells against glycine mischarging by AlaRS. Acts via tRNA-based rather than protein-based catalysis; rejects L-amino acids rather than detecting D-amino acids in the active site. By recycling D-aminoacyl-tRNA to D-amino acids and free tRNA molecules, this enzyme counteracts the toxicity associated with the formation of D-aminoacyl-tRNA entities in vivo and helps enforce protein L-homochirality. The polypeptide is D-aminoacyl-tRNA deacylase (Actinobacillus succinogenes (strain ATCC 55618 / DSM 22257 / CCUG 43843 / 130Z)).